The chain runs to 715 residues: Fatty acid oxidation complex subunit alpha (715 aa).

The interval 1–190 (MIYEGKAITV…KVGAVDAVVA (190 aa)) is enoyl-CoA hydratase/isomerase. Asp297 is a substrate binding site. The tract at residues 312-715 (RDVKQAAVLG…MAKNGQSFFG (404 aa)) is 3-hydroxyacyl-CoA dehydrogenase. NAD(+) is bound by residues Met325, Asp344, 401–403 (VVE), Lys408, and Ser430. The active-site For 3-hydroxyacyl-CoA dehydrogenase activity is His451. Asn454 serves as a coordination point for NAD(+). Substrate is bound by residues Asn501 and Tyr660.

It in the N-terminal section; belongs to the enoyl-CoA hydratase/isomerase family. In the C-terminal section; belongs to the 3-hydroxyacyl-CoA dehydrogenase family. As to quaternary structure, heterotetramer of two alpha chains (FadB) and two beta chains (FadA).

The enzyme catalyses a (3S)-3-hydroxyacyl-CoA + NAD(+) = a 3-oxoacyl-CoA + NADH + H(+). It carries out the reaction a (3S)-3-hydroxyacyl-CoA = a (2E)-enoyl-CoA + H2O. It catalyses the reaction a 4-saturated-(3S)-3-hydroxyacyl-CoA = a (3E)-enoyl-CoA + H2O. The catalysed reaction is (3S)-3-hydroxybutanoyl-CoA = (3R)-3-hydroxybutanoyl-CoA. The enzyme catalyses a (3Z)-enoyl-CoA = a 4-saturated (2E)-enoyl-CoA. It carries out the reaction a (3E)-enoyl-CoA = a 4-saturated (2E)-enoyl-CoA. It participates in lipid metabolism; fatty acid beta-oxidation. Its function is as follows. Involved in the aerobic and anaerobic degradation of long-chain fatty acids via beta-oxidation cycle. Catalyzes the formation of 3-oxoacyl-CoA from enoyl-CoA via L-3-hydroxyacyl-CoA. It can also use D-3-hydroxyacyl-CoA and cis-3-enoyl-CoA as substrate. The sequence is that of Fatty acid oxidation complex subunit alpha from Pseudomonas fluorescens (strain SBW25).